The primary structure comprises 338 residues: Aspartate carbamoyltransferase catalytic subunit (338 aa).

The carbamoyl phosphate site is built by R72 and T73. K100 serves as a coordination point for L-aspartate. Carbamoyl phosphate contacts are provided by R122, H152, and Q155. L-aspartate-binding residues include R186 and R243. The carbamoyl phosphate site is built by G284 and P285.

The protein belongs to the aspartate/ornithine carbamoyltransferase superfamily. ATCase family. In terms of assembly, heterododecamer (2C3:3R2) of six catalytic PyrB chains organized as two trimers (C3), and six regulatory PyrI chains organized as three dimers (R2).

It carries out the reaction carbamoyl phosphate + L-aspartate = N-carbamoyl-L-aspartate + phosphate + H(+). Its pathway is pyrimidine metabolism; UMP biosynthesis via de novo pathway; (S)-dihydroorotate from bicarbonate: step 2/3. Catalyzes the condensation of carbamoyl phosphate and aspartate to form carbamoyl aspartate and inorganic phosphate, the committed step in the de novo pyrimidine nucleotide biosynthesis pathway. The polypeptide is Aspartate carbamoyltransferase catalytic subunit (Acinetobacter baylyi (strain ATCC 33305 / BD413 / ADP1)).